Consider the following 323-residue polypeptide: Delta-aminolevulinic acid dehydratase (323 aa).

Zn(2+) is bound by residues Cys118, Cys120, and Cys128. The Schiff-base intermediate with substrate role is filled by Lys193. 2 residues coordinate 5-aminolevulinate: Arg203 and Arg215. Glu231 lines the Mg(2+) pocket. Lys246 serves as the catalytic Schiff-base intermediate with substrate. Positions 272 and 311 each coordinate 5-aminolevulinate.

It belongs to the ALAD family. As to quaternary structure, homooctamer. Requires Zn(2+) as cofactor.

It catalyses the reaction 2 5-aminolevulinate = porphobilinogen + 2 H2O + H(+). It participates in porphyrin-containing compound metabolism; protoporphyrin-IX biosynthesis; coproporphyrinogen-III from 5-aminolevulinate: step 1/4. Functionally, catalyzes an early step in the biosynthesis of tetrapyrroles. Binds two molecules of 5-aminolevulinate per subunit, each at a distinct site, and catalyzes their condensation to form porphobilinogen. The protein is Delta-aminolevulinic acid dehydratase (hemB) of Helicobacter pylori (strain J99 / ATCC 700824) (Campylobacter pylori J99).